The following is a 327-amino-acid chain: Phenylalanine--tRNA ligase alpha subunit (327 aa).

E252 contributes to the Mg(2+) binding site.

It belongs to the class-II aminoacyl-tRNA synthetase family. Phe-tRNA synthetase alpha subunit type 1 subfamily. Tetramer of two alpha and two beta subunits. It depends on Mg(2+) as a cofactor.

It is found in the cytoplasm. It carries out the reaction tRNA(Phe) + L-phenylalanine + ATP = L-phenylalanyl-tRNA(Phe) + AMP + diphosphate + H(+). The polypeptide is Phenylalanine--tRNA ligase alpha subunit (Vibrio parahaemolyticus serotype O3:K6 (strain RIMD 2210633)).